A 284-amino-acid chain; its full sequence is Nucleotide-binding protein Sden_0486 (284 aa).

8–15 contacts ATP; that stretch reads GRSGSGKS. 56–59 is a GTP binding site; sequence DVRN.

It belongs to the RapZ-like family.

Its function is as follows. Displays ATPase and GTPase activities. The chain is Nucleotide-binding protein Sden_0486 from Shewanella denitrificans (strain OS217 / ATCC BAA-1090 / DSM 15013).